The sequence spans 826 residues: Glycerol-3-phosphate acyltransferase 1, mitochondrial (826 aa).

Residues 1–87 are Cytoplasmic-facing; that stretch reads MDESALTLGT…FFNPSIPSLG (87 aa). The important for mitochondrial localization stretch occupies residues 80–120; it reads NPSIPSLGLRNVIYINETHTRHRGWLARRLSYVLFIQERDV. The stretch at 88-118 is an intramembrane region; the sequence is LRNVIYINETHTRHRGWLARRLSYVLFIQER. The Cytoplasmic segment spans residues 119–826; it reads DVHKGMFATN…LEYILSFVVL (708 aa). Residues 230 to 235 carry the HXXXXD motif motif; the sequence is HRSHID. Arg-278, Arg-279, Lys-288, Arg-293, and Arg-328 together coordinate CoA. Ser-380 is modified (phosphoserine). Arg-462 serves as a coordination point for CoA. Residues Ser-686 and Ser-693 each carry the phosphoserine modification. Lys-778 and Lys-782 each carry N6-acetyllysine.

This sequence belongs to the GPAT/DAPAT family.

It is found in the mitochondrion outer membrane. The enzyme catalyses sn-glycerol 3-phosphate + an acyl-CoA = a 1-acyl-sn-glycero-3-phosphate + CoA. The catalysed reaction is (9Z,12Z)-octadecadienoyl-CoA + sn-glycerol 3-phosphate = 1-(9Z,12Z)-octadecadienoyl-sn-glycero-3-phosphate + CoA. It catalyses the reaction sn-glycerol 3-phosphate + (9Z)-octadecenoyl-CoA = 1-(9Z-octadecenoyl)-sn-glycero-3-phosphate + CoA. It carries out the reaction sn-glycerol 3-phosphate + octadecanoyl-CoA = 1-octadecanoyl-sn-glycero-3-phosphate + CoA. The enzyme catalyses sn-glycerol 3-phosphate + hexadecanoyl-CoA = 1-hexadecanoyl-sn-glycero-3-phosphate + CoA. The catalysed reaction is dodecanoyl-CoA + sn-glycerol 3-phosphate = 1-dodecanoyl-sn-glycerol 3-phosphate + CoA. It catalyses the reaction 1-acyl-sn-glycero-3-phospho-(1'-sn-glycerol) + an acyl-CoA = a 1,2-diacyl-sn-glycero-3-phospho-(1'-sn-glycerol) + CoA. It participates in phospholipid metabolism; CDP-diacylglycerol biosynthesis; CDP-diacylglycerol from sn-glycerol 3-phosphate: step 1/3. Mitochondrial membrane protein that catalyzes the essential first step of biosynthesis of glycerolipids such as triglycerides, phosphatidic acids and lysophosphatidic acids. Esterifies acyl-group from acyl-coenzyme A (acyl-CoA) to the sn-1 position of glycerol-3-phosphate, to produce lysophosphatidic acid. Has a narrow hydrophobic binding cleft that selects for a linear acyl chain. Catalytic activity is higher for substrates with a 16-carbon acyl chain. The sequence is that of Glycerol-3-phosphate acyltransferase 1, mitochondrial from Sus scrofa (Pig).